We begin with the raw amino-acid sequence, 468 residues long: ATP synthase subunit beta (468 aa).

155–162 contacts ATP; sequence GGAGVGKT.

Belongs to the ATPase alpha/beta chains family. In terms of assembly, F-type ATPases have 2 components, CF(1) - the catalytic core - and CF(0) - the membrane proton channel. CF(1) has five subunits: alpha(3), beta(3), gamma(1), delta(1), epsilon(1). CF(0) has three main subunits: a(1), b(2) and c(9-12). The alpha and beta chains form an alternating ring which encloses part of the gamma chain. CF(1) is attached to CF(0) by a central stalk formed by the gamma and epsilon chains, while a peripheral stalk is formed by the delta and b chains.

Its subcellular location is the cell membrane. It carries out the reaction ATP + H2O + 4 H(+)(in) = ADP + phosphate + 5 H(+)(out). In terms of biological role, produces ATP from ADP in the presence of a proton gradient across the membrane. The catalytic sites are hosted primarily by the beta subunits. The protein is ATP synthase subunit beta of Streptococcus thermophilus (strain CNRZ 1066).